A 421-amino-acid chain; its full sequence is Vasopressin V1b receptor (421 aa).

At 1–35 (MDSEPSWTATPSPGGTLFVPNTTTPWLGRDEELAK) the chain is on the extracellular side. N-linked (GlcNAc...) asparagine glycosylation is present at N21. A helical membrane pass occupies residues 36-59 (VEIGILATVLVLATGGNLAVLLIL). The Cytoplasmic portion of the chain corresponds to 60–71 (GLQGHKRSRMHL). A helical membrane pass occupies residues 72–93 (FVLHLALTDLGVALFQVLPQLL). The Extracellular segment spans residues 94-108 (WDITYRFQGSDLLCR). Cysteines 107 and 186 form a disulfide. The helical transmembrane segment at 109–130 (AVKYLQVLSMFASTYMLLAMTL) threads the bilayer. Over 131-151 (DRYLAVCHPLRSLQQPSQSTY) the chain is Cytoplasmic. A helical membrane pass occupies residues 152-173 (PLIAAPWLLAAILSLPQVFIFS). Topologically, residues 174–202 (LREVIQGSGVLDCWADFYFSWGPRAYITW) are extracellular. Residues 203–223 (TTMAIFVLPVVVLTACYGLIC) form a helical membrane-spanning segment. Residues 224-280 (HEIYKNLKVKTQAGREERRGWPKSSSSAAAAATRGLPSRVSSISTISRAKIRTVKMT) are Cytoplasmic-facing. A helical transmembrane segment spans residues 281–300 (FVIVLAYIACWAPFFSVQMW). At 301–318 (SVWDENAPNEDSTNVAFT) the chain is on the extracellular side. A helical transmembrane segment spans residues 319 to 338 (ISMLLGNLSSCCNPWIYMGF). Over 339–421 (NSHLLPRSLS…GEATMETSIS (83 aa)) the chain is Cytoplasmic. A disordered region spans residues 399–421 (KPAGSLKDLEQVDGEATMETSIS).

The protein belongs to the G-protein coupled receptor 1 family. Vasopressin/oxytocin receptor subfamily.

The protein localises to the cell membrane. Functionally, receptor for arginine vasopressin. The activity of this receptor is mediated by G proteins which activate a phosphatidyl-inositol-calcium second messenger system. The sequence is that of Vasopressin V1b receptor (Avpr1b) from Mus musculus (Mouse).